Consider the following 127-residue polypeptide: MDLIVEDLAAIDNKLSQRHIDLDPNGYFIIYIDKTAGLIYAKHFTNIIDERGLAVDPETGKVIPARGKVERTYTTVFAGRTAKELCVKIFEETQPCPVTMLDHAAYLGREFVRAEVALVAGQEYVQD.

This sequence belongs to the ycf91 family.

The polypeptide is Ycf91-like protein (Nostoc sp. (strain PCC 7120 / SAG 25.82 / UTEX 2576)).